The following is a 55-amino-acid chain: Large ribosomal subunit protein bL33 (55 aa).

The protein belongs to the bacterial ribosomal protein bL33 family.

The chain is Large ribosomal subunit protein bL33 from Aliivibrio salmonicida (strain LFI1238) (Vibrio salmonicida (strain LFI1238)).